Reading from the N-terminus, the 500-residue chain is Probable cytosol aminopeptidase (500 aa).

Lysine 267 and aspartate 272 together coordinate Mn(2+). Lysine 279 is an active-site residue. Mn(2+)-binding residues include aspartate 290, aspartate 349, and glutamate 351. Arginine 353 is a catalytic residue.

It belongs to the peptidase M17 family. Mn(2+) is required as a cofactor.

The protein localises to the cytoplasm. It carries out the reaction Release of an N-terminal amino acid, Xaa-|-Yaa-, in which Xaa is preferably Leu, but may be other amino acids including Pro although not Arg or Lys, and Yaa may be Pro. Amino acid amides and methyl esters are also readily hydrolyzed, but rates on arylamides are exceedingly low.. The catalysed reaction is Release of an N-terminal amino acid, preferentially leucine, but not glutamic or aspartic acids.. Functionally, presumably involved in the processing and regular turnover of intracellular proteins. Catalyzes the removal of unsubstituted N-terminal amino acids from various peptides. This chain is Probable cytosol aminopeptidase, found in Tolumonas auensis (strain DSM 9187 / NBRC 110442 / TA 4).